The primary structure comprises 473 residues: Serine carboxypeptidase-like 25 (473 aa).

An N-terminal signal peptide occupies residues 1–22; that stretch reads MAMAKLAIFTTLMAILVMTSQG. N-linked (GlcNAc...) asparagine glycans are attached at residues Asn-46 and Asn-143. Disulfide bonds link Cys-92-Cys-358, Cys-252-Cys-263, and Cys-288-Cys-326. Ser-185 is a catalytic residue. Residues Asn-289, Asn-299, Asn-347, and Asn-367 are each glycosylated (N-linked (GlcNAc...) asparagine). Catalysis depends on residues Asp-395 and His-447.

This sequence belongs to the peptidase S10 family. Ubiquitous.

The protein localises to the secreted. Its function is as follows. Probable carboxypeptidase. The polypeptide is Serine carboxypeptidase-like 25 (SCPL25) (Arabidopsis thaliana (Mouse-ear cress)).